We begin with the raw amino-acid sequence, 543 residues long: Hydroxylamine reductase (543 aa).

Cysteine 5, cysteine 8, cysteine 17, and cysteine 23 together coordinate [4Fe-4S] cluster. Residues histidine 236, glutamate 260, cysteine 304, cysteine 398, cysteine 426, cysteine 451, glutamate 486, and lysine 488 each contribute to the hybrid [4Fe-2O-2S] cluster site. At cysteine 398 the chain carries Cysteine persulfide.

It belongs to the HCP family. [4Fe-4S] cluster serves as cofactor. It depends on hybrid [4Fe-2O-2S] cluster as a cofactor.

The protein localises to the cytoplasm. It catalyses the reaction A + NH4(+) + H2O = hydroxylamine + AH2 + H(+). In terms of biological role, catalyzes the reduction of hydroxylamine to form NH(3) and H(2)O. This chain is Hydroxylamine reductase, found in Bacteroides thetaiotaomicron (strain ATCC 29148 / DSM 2079 / JCM 5827 / CCUG 10774 / NCTC 10582 / VPI-5482 / E50).